We begin with the raw amino-acid sequence, 302 residues long: Aspartate carbamoyltransferase catalytic subunit (302 aa).

Carbamoyl phosphate-binding residues include R53 and T54. K82 provides a ligand contact to L-aspartate. Residues R103, H131, and Q134 each contribute to the carbamoyl phosphate site. L-aspartate contacts are provided by R164 and R223. Positions 260 and 261 each coordinate carbamoyl phosphate.

This sequence belongs to the aspartate/ornithine carbamoyltransferase superfamily. ATCase family. As to quaternary structure, heterooligomer of catalytic and regulatory chains.

The catalysed reaction is carbamoyl phosphate + L-aspartate = N-carbamoyl-L-aspartate + phosphate + H(+). The protein operates within pyrimidine metabolism; UMP biosynthesis via de novo pathway; (S)-dihydroorotate from bicarbonate: step 2/3. Catalyzes the condensation of carbamoyl phosphate and aspartate to form carbamoyl aspartate and inorganic phosphate, the committed step in the de novo pyrimidine nucleotide biosynthesis pathway. The sequence is that of Aspartate carbamoyltransferase catalytic subunit from Methanococcus maripaludis (strain C7 / ATCC BAA-1331).